Reading from the N-terminus, the 539-residue chain is Cytochrome P450 monooxygenase buaD (539 aa).

The first 16 residues, 1–16, serve as a signal peptide directing secretion; it reads MLVPVLTLLGTLTATG. Asn-120 carries an N-linked (GlcNAc...) asparagine glycan. A heme-binding site is contributed by Cys-478. Asn-520 is a glycosylation site (N-linked (GlcNAc...) asparagine).

Belongs to the cytochrome P450 family. The cofactor is heme.

It functions in the pathway mycotoxin biosynthesis. In terms of biological role, cytochrome P450 monooxygenase; part of the gene cluster that mediates the biosynthesis of burnettramic acids, an unusual class of bolaamphiphilic pyrrolizidinediones that display potent antibacterial, antifungal, and cytotoxic activities. The first step of the biosynthesis of burnettramic acids is the hydroxylation of proline by the proline hydroxylase buaE to generate 4-hydroxyproline. The PKS-NRPS buaA and trans-enoyl reductase buaC construct the highly reduced polyketide chain, and the condensation (C) domain of buaA then catalyzes the amide bond formation with the activated 4-hydroxyproline. This is followed by the R domain releasing the nascent polyketide-peptide directly via a Dieckmann condensation to afford a tetramic acid fused to the hydroxyproline, generating the bicyclic pyrrolidinedione moiety. The cytochrome P450 monooxygenases buaD and buaG are likely responsible for the multiple hydroxylations on the polyketide chain and its terminus, although in the heterologous context, buaD does not appear to be required. Therefore, while buaG may be a multifunctional cytochrome P450 monooxygenase, it cannot be ruled out that the two secondary alcohols on the polyketide chain could have an acetate origin. Finally, the glycosyltransferase buaB transfers beta-D-mannose to the aglycone burnettramic acid A to form burnettramic acid A. Burnettramic acid B is a minor cis-pyrrolizidine epimer of burnettramic acid A and it is likely that small amounts of it form naturally in acidic environments. The polypeptide is Cytochrome P450 monooxygenase buaD (Petromyces alliaceus (Aspergillus alliaceus)).